The primary structure comprises 612 residues: Zinc metalloproteinase nas-36 (612 aa).

The first 16 residues, 1 to 16 (MLLLVLLFVFISATNA), serve as a signal peptide directing secretion. N-linked (GlcNAc...) asparagine glycosylation occurs at Asn-15. A propeptide spanning residues 17-122 (SDVGRRELEK…KSKPNVRGRR (106 aa)) is cleaved from the precursor. Residues 123–320 (SFDASPESKW…IETINKAYCS (198 aa)) form the Peptidase M12A domain. Asn-163 is a glycosylation site (N-linked (GlcNAc...) asparagine). Intrachain disulfides connect Cys-166/Cys-319, Cys-190/Cys-209, Cys-329/Cys-343, Cys-345/Cys-354, Cys-365/Cys-394, Cys-515/Cys-546, Cys-519/Cys-551, and Cys-531/Cys-536. His-217 contributes to the Zn(2+) binding site. The active site involves Glu-218. Positions 221 and 227 each coordinate Zn(2+). Positions 320–355 (SDRCSGSNDCKNGGYPHPKQCDTCLCPNGLSGPKCE) constitute an EGF-like domain. One can recognise a CUB domain in the interval 365 to 478 (CGGKIVVKEE…VGFKLQARAT (114 aa)). The region spanning 503–552 (TDQWAEWGSWSQCSRSCGGCGIMSRVRVCRTKQCKGRRQEFSTCNLKACP) is the TSP type-1 domain.

Zn(2+) is required as a cofactor.

The protein resides in the secreted. With respect to regulation, inhibited by 1,10-phenanthroline. Functionally, metalloprotease. Involved in molting, a process during larval stages in which a new cuticle is formed and the old cuticle is shed. This Haemonchus contortus (Barber pole worm) protein is Zinc metalloproteinase nas-36.